The sequence spans 466 residues: 3-isopropylmalate dehydratase large subunit (466 aa).

Residues Cys349, Cys410, and Cys413 each contribute to the [4Fe-4S] cluster site.

Belongs to the aconitase/IPM isomerase family. LeuC type 1 subfamily. In terms of assembly, heterodimer of LeuC and LeuD. [4Fe-4S] cluster is required as a cofactor.

It carries out the reaction (2R,3S)-3-isopropylmalate = (2S)-2-isopropylmalate. It participates in amino-acid biosynthesis; L-leucine biosynthesis; L-leucine from 3-methyl-2-oxobutanoate: step 2/4. Functionally, catalyzes the isomerization between 2-isopropylmalate and 3-isopropylmalate, via the formation of 2-isopropylmaleate. The sequence is that of 3-isopropylmalate dehydratase large subunit from Ruthia magnifica subsp. Calyptogena magnifica.